Consider the following 430-residue polypeptide: Adenylosuccinate synthetase (430 aa).

GTP is bound by residues 13 to 19 and 41 to 43; these read GDEGKGK and GHT. Asp-14 serves as the catalytic Proton acceptor. Residues Asp-14 and Gly-41 each coordinate Mg(2+). IMP is bound by residues 14–17, 39–42, Thr-130, Arg-144, Gln-225, Thr-240, and Arg-304; these read DEGK and NAGH. Residue His-42 is the Proton donor of the active site. Residue 300–306 coordinates substrate; the sequence is ASTGRPR. Residues Arg-306, 332 to 334, and 414 to 416 each bind GTP; these read KLD and STG.

Belongs to the adenylosuccinate synthetase family. As to quaternary structure, homodimer. Requires Mg(2+) as cofactor.

The protein resides in the cytoplasm. The enzyme catalyses IMP + L-aspartate + GTP = N(6)-(1,2-dicarboxyethyl)-AMP + GDP + phosphate + 2 H(+). It participates in purine metabolism; AMP biosynthesis via de novo pathway; AMP from IMP: step 1/2. Plays an important role in the de novo pathway of purine nucleotide biosynthesis. Catalyzes the first committed step in the biosynthesis of AMP from IMP. This chain is Adenylosuccinate synthetase, found in Xanthomonas campestris pv. campestris (strain 8004).